A 263-amino-acid polypeptide reads, in one-letter code: Imidazole glycerol phosphate synthase subunit HisF (263 aa).

Residues aspartate 11 and aspartate 130 contribute to the active site.

The protein belongs to the HisA/HisF family. As to quaternary structure, heterodimer of HisH and HisF.

It localises to the cytoplasm. It carries out the reaction 5-[(5-phospho-1-deoxy-D-ribulos-1-ylimino)methylamino]-1-(5-phospho-beta-D-ribosyl)imidazole-4-carboxamide + L-glutamine = D-erythro-1-(imidazol-4-yl)glycerol 3-phosphate + 5-amino-1-(5-phospho-beta-D-ribosyl)imidazole-4-carboxamide + L-glutamate + H(+). Its pathway is amino-acid biosynthesis; L-histidine biosynthesis; L-histidine from 5-phospho-alpha-D-ribose 1-diphosphate: step 5/9. Functionally, IGPS catalyzes the conversion of PRFAR and glutamine to IGP, AICAR and glutamate. The HisF subunit catalyzes the cyclization activity that produces IGP and AICAR from PRFAR using the ammonia provided by the HisH subunit. The polypeptide is Imidazole glycerol phosphate synthase subunit HisF (Synechococcus sp. (strain CC9311)).